A 154-amino-acid polypeptide reads, in one-letter code: SsrA-binding protein (154 aa).

It belongs to the SmpB family.

The protein localises to the cytoplasm. Functionally, required for rescue of stalled ribosomes mediated by trans-translation. Binds to transfer-messenger RNA (tmRNA), required for stable association of tmRNA with ribosomes. tmRNA and SmpB together mimic tRNA shape, replacing the anticodon stem-loop with SmpB. tmRNA is encoded by the ssrA gene; the 2 termini fold to resemble tRNA(Ala) and it encodes a 'tag peptide', a short internal open reading frame. During trans-translation Ala-aminoacylated tmRNA acts like a tRNA, entering the A-site of stalled ribosomes, displacing the stalled mRNA. The ribosome then switches to translate the ORF on the tmRNA; the nascent peptide is terminated with the 'tag peptide' encoded by the tmRNA and targeted for degradation. The ribosome is freed to recommence translation, which seems to be the essential function of trans-translation. This chain is SsrA-binding protein, found in Lachnoclostridium phytofermentans (strain ATCC 700394 / DSM 18823 / ISDg) (Clostridium phytofermentans).